A 207-amino-acid chain; its full sequence is Outer-membrane lipoprotein LolB (207 aa).

An N-terminal signal peptide occupies residues 1-21 (MPLPDFRLIRLLPLAALVLTA). Cys-22 carries the N-palmitoyl cysteine lipid modification. Residue Cys-22 is the site of S-diacylglycerol cysteine attachment.

This sequence belongs to the LolB family. As to quaternary structure, monomer.

The protein resides in the cell outer membrane. Plays a critical role in the incorporation of lipoproteins in the outer membrane after they are released by the LolA protein. The chain is Outer-membrane lipoprotein LolB from Escherichia coli (strain SMS-3-5 / SECEC).